The primary structure comprises 83 residues: uncharacterized protein (83 aa).

Belongs to the UPF0440 family.

This is an uncharacterized protein from Natronomonas pharaonis (strain ATCC 35678 / DSM 2160 / CIP 103997 / JCM 8858 / NBRC 14720 / NCIMB 2260 / Gabara) (Halobacterium pharaonis).